Reading from the N-terminus, the 66-residue chain is Large ribosomal subunit protein bL35 (66 aa).

The protein belongs to the bacterial ribosomal protein bL35 family.

The protein is Large ribosomal subunit protein bL35 of Thermomicrobium roseum (strain ATCC 27502 / DSM 5159 / P-2).